A 35-amino-acid chain; its full sequence is Cupiennin-1c (35 aa).

At glutamate 35 the chain carries Glutamic acid 1-amide.

As to expression, expressed by the venom gland.

The protein localises to the secreted. Has antimicrobial activity against E.coli, E.faecalis, P.aeruginosa, and S.aureus. This Cupiennius salei (American wandering spider) protein is Cupiennin-1c.